Consider the following 254-residue polypeptide: MRILVTNDDGIHAPGLATLEEIARELSDDVWVVAPESDQSGVSHSLSLNDPLRLRQVSEQRFAVKGTPSDCVILGVRHILGDHGPDLVLSGVNRGQNVAEDVTYSGTIAAAMEGTILGIRSIALSQAYGAGGRGALKWDCARTHGAKVVRKILETGIEPGILVNVNFPDCEPADVQGVAVAAQGFRNQALLSIDARVDGRGNPYFWLAFAKARFEPGHGSDLKAIAEKRISVTPLRLDLTDEPTLTRFAQAFAE.

A divalent metal cation-binding residues include Asp8, Asp9, Ser40, and Asn93.

Belongs to the SurE nucleotidase family. A divalent metal cation is required as a cofactor.

The protein resides in the cytoplasm. The enzyme catalyses a ribonucleoside 5'-phosphate + H2O = a ribonucleoside + phosphate. In terms of biological role, nucleotidase that shows phosphatase activity on nucleoside 5'-monophosphates. This chain is 5'-nucleotidase SurE, found in Methylobacterium radiotolerans (strain ATCC 27329 / DSM 1819 / JCM 2831 / NBRC 15690 / NCIMB 10815 / 0-1).